Here is a 380-residue protein sequence, read N- to C-terminus: MIQQAQFNVQMAEEDRWLTQYPNMEMIVNNKGPKPIFPELNFNITGLEEKSRYVVLLSIQKFDNIRYGFKNGKWGPSKVRHATKKEQEIKYFLHPDGTKLGEELMKETIKFDTVRITNHKKFMDKDNVFFVETMHKYVPVLTVKNITNVESANHSMRMEVAQFFPVTVYNQESIGNWKSKFHKNATFENRLDGGNKRKNTNSREEPSSKRSKNETEIAVLDILQVASQSENYNESTNSGRLQNEISSSIHQFPSTSYQNQYPHAYPTVNTPPIYAQQFPAPFDEKQNQFYPKTDENLAPNCAQDASSLPNFAMNQKASFANQYPYHPYYHQYSQLDHGSPYQYMNNSINSDSSFQSSFSTENSYFDDNGNPIHYPYYPYK.

The T-box DNA-binding region spans M11 to D192. Residues E188–T215 are disordered. The segment covering N189 to T215 has biased composition (basic and acidic residues).

The protein localises to the nucleus. This Caenorhabditis elegans protein is Putative T-box protein 40 (tbx-40).